A 76-amino-acid polypeptide reads, in one-letter code: uncharacterized protein (76 aa).

Helical transmembrane passes span 2–22 (LKVA…YSLF), 28–48 (LLIV…VEAI), and 56–76 (EYLL…KFII).

It is found in the cell membrane. This is an uncharacterized protein from Bacillus subtilis (strain 168).